The following is a 300-amino-acid chain: MSNDKRTIYVGGLADEVTERLLNNAFIPFGDIADIQMPADYESQRHRGFAFIEYEQSEDAAAAIDNMNDSELCGRTIRVNLAKPVRVKEDSFKPIWADDDWLQKHAGATLQPEGEPEAEKVETPSTGPAVIEKAEKRNPQVFFDIRIGGNDAGRIVMLLRADVVPKTAENFRQLCTHEQGYGYKGCSFHRVIPEFMCQGGDFTNNNGTGGKSIYGKKFNDENFNLKHNSFGTLSMANSGANTNGSQFFICTTKTDWLDNKHVVFGHVISGAEVVRKMERCGSKSGTPSQKIVIYSCGELK.

Positions 6-84 (RTIYVGGLAD…RTIRVNLAKP (79 aa)) constitute an RRM domain. The 157-residue stretch at 142–298 (FFDIRIGGND…QKIVIYSCGE (157 aa)) folds into the PPIase cyclophilin-type domain.

The protein belongs to the cyclophilin-type PPIase family. PPIase E subfamily.

It is found in the nucleus. It carries out the reaction [protein]-peptidylproline (omega=180) = [protein]-peptidylproline (omega=0). Its function is as follows. PPIases accelerate the folding of proteins. It catalyzes the cis-trans isomerization of proline imidic peptide bonds in oligopeptides. Combines RNA-binding and PPIase activities. This chain is Peptidyl-prolyl cis-trans isomerase E (cyp33), found in Drosophila melanogaster (Fruit fly).